We begin with the raw amino-acid sequence, 147 residues long: uncharacterized protein (147 aa).

Residues 110–133 (VLEPPTPSQPAPTPEPAVKPQPIA) form a disordered region. The segment covering 113–128 (PPTPSQPAPTPEPAVK) has biased composition (pro residues).

This is an uncharacterized protein from Ictalurid herpesvirus 1 (strain Auburn) (IcHV-1).